Reading from the N-terminus, the 272-residue chain is FAS1 domain-containing protein YDR262W (272 aa).

The signal sequence occupies residues 1-26 (MIFNLPVSVLLYFSLIWAMEPSFVRG). Residues 100–269 (PLSLESKLSL…GVILMVDFTL (170 aa)) enclose the FAS1 domain.

The protein resides in the vacuole. In Saccharomyces cerevisiae (strain ATCC 204508 / S288c) (Baker's yeast), this protein is FAS1 domain-containing protein YDR262W.